The primary structure comprises 618 residues: Chaperone protein DnaK (618 aa).

A Phosphothreonine; by autocatalysis modification is found at threonine 175. Residues 579–618 (GAPGAEGFDSNMAGEANAGQNANNDDNVVDADYKVEDDEK) form a disordered region. The segment covering 591-604 (AGEANAGQNANNDD) has biased composition (low complexity).

The protein belongs to the heat shock protein 70 family.

Functionally, acts as a chaperone. The chain is Chaperone protein DnaK from Clostridium tetani (strain Massachusetts / E88).